A 467-amino-acid chain; its full sequence is Replication factor C large subunit (467 aa).

ATP is bound at residue 47–54; sequence GPPGVGKT.

It belongs to the activator 1 small subunits family. RfcL subfamily. As to quaternary structure, heteromultimer composed of small subunits (RfcS) and large subunits (RfcL).

Functionally, part of the RFC clamp loader complex which loads the PCNA sliding clamp onto DNA. In Methanothrix thermoacetophila (strain DSM 6194 / JCM 14653 / NBRC 101360 / PT) (Methanosaeta thermophila), this protein is Replication factor C large subunit.